A 448-amino-acid polypeptide reads, in one-letter code: tRNA-2-methylthio-N(6)-dimethylallyladenosine synthase (448 aa).

An MTTase N-terminal domain is found at 2 to 120; the sequence is KKYRIIVFGC…LPELIGKVIE (119 aa). [4Fe-4S] cluster contacts are provided by Cys-11, Cys-47, Cys-81, Cys-158, Cys-162, and Cys-165. The Radical SAM core domain maps to 144–374; sequence RKEGVRAWVT…IKLQNKISLE (231 aa). The TRAM domain occupies 377-440; the sequence is EEEVGQTQEV…LAHLTGILSY (64 aa).

The protein belongs to the methylthiotransferase family. MiaB subfamily. In terms of assembly, monomer. [4Fe-4S] cluster is required as a cofactor.

The protein localises to the cytoplasm. The enzyme catalyses N(6)-dimethylallyladenosine(37) in tRNA + (sulfur carrier)-SH + AH2 + 2 S-adenosyl-L-methionine = 2-methylsulfanyl-N(6)-dimethylallyladenosine(37) in tRNA + (sulfur carrier)-H + 5'-deoxyadenosine + L-methionine + A + S-adenosyl-L-homocysteine + 2 H(+). Functionally, catalyzes the methylthiolation of N6-(dimethylallyl)adenosine (i(6)A), leading to the formation of 2-methylthio-N6-(dimethylallyl)adenosine (ms(2)i(6)A) at position 37 in tRNAs that read codons beginning with uridine. The sequence is that of tRNA-2-methylthio-N(6)-dimethylallyladenosine synthase from Pelotomaculum thermopropionicum (strain DSM 13744 / JCM 10971 / SI).